Here is a 276-residue protein sequence, read N- to C-terminus: Rhomboid protease GlpG (276 aa).

Helical transmembrane passes span 94 to 114 (GPVT…MQIL), 142 to 162 (ALMH…WYLG), 169 to 189 (LGSG…GYVQ), 192 to 212 (FSGP…GYVW), 229 to 249 (LIIF…GMSM), and 250 to 270 (ANGA…VDSL). The active-site Nucleophile is the S201. H254 is a catalytic residue.

It belongs to the peptidase S54 family.

It localises to the cell inner membrane. It catalyses the reaction Cleaves type-1 transmembrane domains using a catalytic dyad composed of serine and histidine that are contributed by different transmembrane domains.. Rhomboid-type serine protease that catalyzes intramembrane proteolysis. The polypeptide is Rhomboid protease GlpG (Escherichia coli (strain 55989 / EAEC)).